Reading from the N-terminus, the 175-residue chain is Deoxyuridine 5'-triphosphate nucleotidohydrolase (175 aa).

Substrate-binding positions include 67 to 69, Asn80, 84 to 86, and Lys94; these read RSG and TVD. The disordered stretch occupies residues 138–175; it reads RAEGGFGSTGGHAAVGADTNGQQGGNRYASVVSDRKGQ.

Belongs to the dUTPase family. It depends on Mg(2+) as a cofactor.

It catalyses the reaction dUTP + H2O = dUMP + diphosphate + H(+). It functions in the pathway pyrimidine metabolism; dUMP biosynthesis; dUMP from dCTP (dUTP route): step 2/2. Functionally, this enzyme is involved in nucleotide metabolism: it produces dUMP, the immediate precursor of thymidine nucleotides and it decreases the intracellular concentration of dUTP so that uracil cannot be incorporated into DNA. This is Deoxyuridine 5'-triphosphate nucleotidohydrolase from Streptomyces avermitilis (strain ATCC 31267 / DSM 46492 / JCM 5070 / NBRC 14893 / NCIMB 12804 / NRRL 8165 / MA-4680).